The sequence spans 486 residues: Bifunctional protein GlmU (486 aa).

The interval 1–241 (MSASDSSSAV…ARELAGVNDR (241 aa)) is pyrophosphorylase. Residues 13–16 (LAAG), K27, Q84, and 89–90 (GT) each bind UDP-N-acetyl-alpha-D-glucosamine. Residue D114 coordinates Mg(2+). 4 residues coordinate UDP-N-acetyl-alpha-D-glucosamine: G151, E166, N181, and N239. N239 is a binding site for Mg(2+). The segment at 242 to 262 (VQLAEAGAELNRRTVEAAMRG) is linker. Positions 263–486 (GATIVDPATT…AQNSVPNQEG (224 aa)) are N-acetyltransferase. Positions 344 and 362 each coordinate UDP-N-acetyl-alpha-D-glucosamine. H374 functions as the Proton acceptor in the catalytic mechanism. Positions 377 and 388 each coordinate UDP-N-acetyl-alpha-D-glucosamine. Acetyl-CoA-binding positions include A391, 397 to 398 (NY), S416, and A434. Positions 464–486 (KRPGTAAADAAAAAQNSVPNQEG) are disordered.

The protein in the N-terminal section; belongs to the N-acetylglucosamine-1-phosphate uridyltransferase family. It in the C-terminal section; belongs to the transferase hexapeptide repeat family. Homotrimer. Mg(2+) serves as cofactor.

The protein resides in the cytoplasm. The catalysed reaction is alpha-D-glucosamine 1-phosphate + acetyl-CoA = N-acetyl-alpha-D-glucosamine 1-phosphate + CoA + H(+). It carries out the reaction N-acetyl-alpha-D-glucosamine 1-phosphate + UTP + H(+) = UDP-N-acetyl-alpha-D-glucosamine + diphosphate. It functions in the pathway nucleotide-sugar biosynthesis; UDP-N-acetyl-alpha-D-glucosamine biosynthesis; N-acetyl-alpha-D-glucosamine 1-phosphate from alpha-D-glucosamine 6-phosphate (route II): step 2/2. It participates in nucleotide-sugar biosynthesis; UDP-N-acetyl-alpha-D-glucosamine biosynthesis; UDP-N-acetyl-alpha-D-glucosamine from N-acetyl-alpha-D-glucosamine 1-phosphate: step 1/1. The protein operates within bacterial outer membrane biogenesis; LPS lipid A biosynthesis. Catalyzes the last two sequential reactions in the de novo biosynthetic pathway for UDP-N-acetylglucosamine (UDP-GlcNAc). The C-terminal domain catalyzes the transfer of acetyl group from acetyl coenzyme A to glucosamine-1-phosphate (GlcN-1-P) to produce N-acetylglucosamine-1-phosphate (GlcNAc-1-P), which is converted into UDP-GlcNAc by the transfer of uridine 5-monophosphate (from uridine 5-triphosphate), a reaction catalyzed by the N-terminal domain. The sequence is that of Bifunctional protein GlmU from Corynebacterium efficiens (strain DSM 44549 / YS-314 / AJ 12310 / JCM 11189 / NBRC 100395).